Consider the following 303-residue polypeptide: GTPase Era (303 aa).

An Era-type G domain is found at 8-176 (YCGFIAIVGR…ASIVRKHMPE (169 aa)). The segment at 16–23 (GRPNVGKS) is G1. Position 16–23 (16–23 (GRPNVGKS)) interacts with GTP. A G2 region spans residues 42-46 (QTTRH). The tract at residues 63–66 (DTPG) is G3. Residues 63–67 (DTPGL) and 125–128 (NKVD) contribute to the GTP site. Residues 125 to 128 (NKVD) form a G4 region. A G5 region spans residues 155 to 157 (ISA). The region spanning 207–284 (LGEELPYSVT…HLELWVKVKS (78 aa)) is the KH type-2 domain.

This sequence belongs to the TRAFAC class TrmE-Era-EngA-EngB-Septin-like GTPase superfamily. Era GTPase family. As to quaternary structure, monomer.

It is found in the cytoplasm. Its subcellular location is the cell inner membrane. In terms of biological role, an essential GTPase that binds both GDP and GTP, with rapid nucleotide exchange. Plays a role in 16S rRNA processing and 30S ribosomal subunit biogenesis and possibly also in cell cycle regulation and energy metabolism. This chain is GTPase Era, found in Yersinia pseudotuberculosis serotype O:1b (strain IP 31758).